The primary structure comprises 231 residues: Ion-translocating oxidoreductase complex subunit E (231 aa).

A run of 6 helical transmembrane segments spans residues 18 to 38 (ALVQ…ATNA), 39 to 59 (LGLG…ISTL), 63 to 83 (TPAE…VSAV), 86 to 106 (LINA…PLIV), 125 to 145 (ALSA…MFVL), and 182 to 202 (PFLL…MLAG).

It belongs to the NqrDE/RnfAE family. As to quaternary structure, the complex is composed of six subunits: RsxA, RsxB, RsxC, RsxD, RsxE and RsxG.

The protein localises to the cell inner membrane. Part of a membrane-bound complex that couples electron transfer with translocation of ions across the membrane. Required to maintain the reduced state of SoxR. The protein is Ion-translocating oxidoreductase complex subunit E of Escherichia coli (strain SE11).